The chain runs to 703 residues: Putative glycosyl hydrolase ecdE (703 aa).

An N-terminal signal peptide occupies residues 1-21 (MKLNIFASAILLCTSAFPVAA). Aspartate 47 is a catalytic residue. 6 N-linked (GlcNAc...) asparagine glycosylation sites follow: asparagine 104, asparagine 120, asparagine 293, asparagine 397, asparagine 443, and asparagine 641.

It belongs to the glycosyl hydrolase 32 family.

This chain is Putative glycosyl hydrolase ecdE, found in Aspergillus rugulosus (Emericella rugulosa).